A 592-amino-acid chain; its full sequence is Arginine--tRNA ligase (592 aa).

A 'HIGH' region motif is present at residues 134 to 144; it reads ANPTGPLHVGH.

It belongs to the class-I aminoacyl-tRNA synthetase family. Monomer.

It is found in the cytoplasm. The catalysed reaction is tRNA(Arg) + L-arginine + ATP = L-arginyl-tRNA(Arg) + AMP + diphosphate. The chain is Arginine--tRNA ligase from Coxiella burnetii (strain RSA 493 / Nine Mile phase I).